The sequence spans 183 residues: Beta-defensin 129 (183 aa).

An N-terminal signal peptide occupies residues 1 to 19 (MKLLFPVFASLMLQYQVNT). Disulfide bonds link C27–C53, C34–C48, and C38–C54. The tract at residues 141 to 183 (TATSTKSNTKESRDSATASPPPAPPPPNILPTPSLELEKAEEQ) is disordered. Residues 159–170 (SPPPAPPPPNIL) are compositionally biased toward pro residues.

Belongs to the beta-defensin family.

It is found in the secreted. Its function is as follows. Has antibacterial activity. This is Beta-defensin 129 (DEFB129) from Pongo pygmaeus (Bornean orangutan).